The sequence spans 366 residues: tRNA (guanine(26)-N(2))-dimethyltransferase (366 aa).

Residues 1–28 form a disordered region; sequence MEVSEGSVTVEVPEERHGASEGSGEGVF. A Trm1 methyltransferase domain is found at 1-365; it reads MEVSEGSVTV…ADVADIRNAV (365 aa). Arg37, Arg64, and Asp79 together coordinate S-adenosyl-L-methionine. The Zn(2+) site is built by Cys234, Cys237, Cys254, and Cys257.

Belongs to the class I-like SAM-binding methyltransferase superfamily. Trm1 family.

The enzyme catalyses guanosine(26) in tRNA + 2 S-adenosyl-L-methionine = N(2)-dimethylguanosine(26) in tRNA + 2 S-adenosyl-L-homocysteine + 2 H(+). Dimethylates a single guanine residue at position 26 of a number of tRNAs using S-adenosyl-L-methionine as donor of the methyl groups. This chain is tRNA (guanine(26)-N(2))-dimethyltransferase, found in Natronomonas pharaonis (strain ATCC 35678 / DSM 2160 / CIP 103997 / JCM 8858 / NBRC 14720 / NCIMB 2260 / Gabara) (Halobacterium pharaonis).